We begin with the raw amino-acid sequence, 194 residues long: Large ribosomal subunit protein bL9 (194 aa).

Residues 148–194 (QDEAERQARGENVINSQFEEDRAAEAEAAQDMAEGGAGSFEGDHYEA) form a disordered region.

Belongs to the bacterial ribosomal protein bL9 family.

Its function is as follows. Binds to the 23S rRNA. This chain is Large ribosomal subunit protein bL9, found in Caulobacter vibrioides (strain ATCC 19089 / CIP 103742 / CB 15) (Caulobacter crescentus).